The primary structure comprises 341 residues: Glyceraldehyde-3-phosphate dehydrogenase 2 (341 aa).

NAD(+) contacts are provided by residues 12-13 (RI), Arg78, and Thr120. Residues 152-154 (SCT) and Thr183 contribute to the D-glyceraldehyde 3-phosphate site. Residue Cys153 is the Nucleophile of the active site. Asn184 provides a ligand contact to NAD(+). D-glyceraldehyde 3-phosphate is bound by residues Arg198, 211-212 (TG), and Arg234. Position 313 (Asn313) interacts with NAD(+).

Belongs to the glyceraldehyde-3-phosphate dehydrogenase family. Homotetramer.

It localises to the cytoplasm. It carries out the reaction D-glyceraldehyde 3-phosphate + phosphate + NAD(+) = (2R)-3-phospho-glyceroyl phosphate + NADH + H(+). It functions in the pathway carbohydrate degradation; glycolysis; pyruvate from D-glyceraldehyde 3-phosphate: step 1/5. Functionally, catalyzes the oxidative phosphorylation of glyceraldehyde 3-phosphate (G3P) to 1,3-bisphosphoglycerate (BPG) using the cofactor NAD. The first reaction step involves the formation of a hemiacetal intermediate between G3P and a cysteine residue, and this hemiacetal intermediate is then oxidized to a thioester, with concomitant reduction of NAD to NADH. The reduced NADH is then exchanged with the second NAD, and the thioester is attacked by a nucleophilic inorganic phosphate to produce BPG. The protein is Glyceraldehyde-3-phosphate dehydrogenase 2 (gapA2) of Staphylococcus aureus (strain MRSA252).